The chain runs to 120 residues: NAD(P)H-quinone oxidoreductase subunit 3 (120 aa).

The next 3 membrane-spanning stretches (helical) occupy residues 10–30 (FLGFLIIAAAVPILALVTNLI), 64–84 (MFALVFVIFDVETVFLYPWAV), and 89–109 (LGLLAFIEALIFIAILVIALA).

Belongs to the complex I subunit 3 family. NDH-1 can be composed of about 15 different subunits; different subcomplexes with different compositions have been identified which probably have different functions.

Its subcellular location is the cellular thylakoid membrane. The enzyme catalyses a plastoquinone + NADH + (n+1) H(+)(in) = a plastoquinol + NAD(+) + n H(+)(out). The catalysed reaction is a plastoquinone + NADPH + (n+1) H(+)(in) = a plastoquinol + NADP(+) + n H(+)(out). In terms of biological role, NDH-1 shuttles electrons from an unknown electron donor, via FMN and iron-sulfur (Fe-S) centers, to quinones in the respiratory and/or the photosynthetic chain. The immediate electron acceptor for the enzyme in this species is believed to be plastoquinone. Couples the redox reaction to proton translocation, and thus conserves the redox energy in a proton gradient. Cyanobacterial NDH-1 also plays a role in inorganic carbon-concentration. In Prochlorococcus marinus (strain MIT 9515), this protein is NAD(P)H-quinone oxidoreductase subunit 3.